The chain runs to 405 residues: Argininosuccinate synthase (405 aa).

Residues 10 to 18 and Ala-37 each bind ATP; that span reads AYSGGLDTS. L-citrulline contacts are provided by Tyr-88 and Ser-93. Gly-118 contacts ATP. L-aspartate is bound by residues Thr-120, Asn-124, and Asp-125. Asn-124 lines the L-citrulline pocket. Arg-128, Ser-179, Ser-188, Glu-264, and Tyr-276 together coordinate L-citrulline.

The protein belongs to the argininosuccinate synthase family. Type 1 subfamily. In terms of assembly, homotetramer.

It is found in the cytoplasm. It carries out the reaction L-citrulline + L-aspartate + ATP = 2-(N(omega)-L-arginino)succinate + AMP + diphosphate + H(+). The protein operates within amino-acid biosynthesis; L-arginine biosynthesis; L-arginine from L-ornithine and carbamoyl phosphate: step 2/3. This chain is Argininosuccinate synthase, found in Stutzerimonas stutzeri (strain A1501) (Pseudomonas stutzeri).